Reading from the N-terminus, the 304-residue chain is PTB domain-containing engulfment adapter protein 1 (304 aa).

A Phosphothreonine modification is found at threonine 16. A PID domain is found at 21-176; sequence SKHFIPYNAK…AGLQKRIQDL (156 aa). A coiled-coil region spans residues 158-202; sequence KDVETRKQIAGLQKRIQDLETENMELKNKVQDLENQLRITQVSAP. The residue at position 223 (serine 223) is a Phosphoserine. Residues 223–246 form a disordered region; sequence SPISHQSSMPTRNGTQPPPVPSRS. Over residues 225-237 the composition is skewed to polar residues; the sequence is ISHQSSMPTRNGT.

This sequence belongs to the ced-6 family. As to quaternary structure, homodimer. Interacts with clathrin. Interacts with GDP-bound ARF6, but not with GTP-bound ARF6. Part of a complex composed of GULP1, ACAP1 and ARF6. Interacts with ACAP1, LRP1, MEGF10 and STAB2. In terms of tissue distribution, widely expressed. Detected in macrophages, pancreas, kidney, skeletal muscle, heart, colon, intestine, lung, placenta and ovary.

The protein localises to the cytoplasm. Functionally, may function as an adapter protein. Required for efficient phagocytosis of apoptotic cells. Modulates cellular glycosphingolipid and cholesterol transport. May play a role in the internalization and endosomal trafficking of various LRP1 ligands, such as PSAP. Increases cellular levels of GTP-bound ARF6. In Homo sapiens (Human), this protein is PTB domain-containing engulfment adapter protein 1 (GULP1).